A 258-amino-acid chain; its full sequence is MLAIISPAKTLDFESAVPKFEFSQPQLTEYSAQLIDVCRQLSPAEIGSLMSISDKLAGLNFARFAEWQKAHTEQNSRAAIYAFKGDVYTGLDVESLSQQDVLFAQQHLRMLSGLYGLLKPLDLMQPYRLEMGTKLVNSKGKDLYAFWGNVITDTLQQAIEAQGDNVLVNLASDEYYKSVKESQLNVRIIKPVFLDNKNGKYKVISFYAKKARGLMCRYIIQNRLSEVEQLKGFDLGGYWFDPTSSSETEFVFKRDVAE.

It belongs to the UPF0246 family.

The chain is UPF0246 protein PM0066 from Pasteurella multocida (strain Pm70).